We begin with the raw amino-acid sequence, 218 residues long: DNA-directed RNA polymerase III subunit RPC7-like (218 aa).

The interval 130-218 is disordered; sequence TIILPKRPPK…SDDNMDEAIY (89 aa). Over residues 139–160 the composition is skewed to basic and acidic residues; that stretch reads KTTEDKEETIQKLETLEKKEEE. Acidic residues-rich tracts occupy residues 161-193 and 201-218; these read VTSE…EETD and NGED…EAIY.

It belongs to the eukaryotic RPC7 RNA polymerase subunit family. In terms of assembly, component of the RNA polymerase III (Pol III) complex consisting of 17 subunits. Pol III exists as two alternative complexes defined by the mutually exclusive incorporation of subunit POLR3G/RPC7alpha or POLR3GL/RPC7beta. Found in a trimeric complex with POLR3C/RPC3 and POLR3F/RPC6. Directly interacts with POLR3C.

It localises to the nucleus. Its function is as follows. DNA-dependent RNA polymerase catalyzes the transcription of DNA into RNA using the four ribonucleoside triphosphates as substrates. Specific peripheric component of RNA polymerase III which synthesizes small RNAs, such as 5S rRNA and tRNAs. In Bos taurus (Bovine), this protein is DNA-directed RNA polymerase III subunit RPC7-like (POLR3GL).